The sequence spans 128 residues: Large ribosomal subunit protein eL22 (128 aa).

Belongs to the eukaryotic ribosomal protein eL22 family. In terms of assembly, component of the large ribosomal subunit.

The protein resides in the cytoplasm. Component of the large ribosomal subunit. The ribosome is a large ribonucleoprotein complex responsible for the synthesis of proteins in the cell. The sequence is that of Large ribosomal subunit protein eL22 (rpl22) from Ictalurus punctatus (Channel catfish).